We begin with the raw amino-acid sequence, 678 residues long: THO complex subunit 5 homolog B (678 aa).

Disordered stretches follow at residues 1–37 (MSSD…EEAE) and 294–329 (ALFK…VQLD). Residues 7–10 (KKRK) carry the Nuclear localization signal motif. The span at 14-37 (NRSEDGKRGRHDEQEGRYYSEEAE) shows a compositional bias: basic and acidic residues. The span at 301–314 (DSQDDESDSDAEEE) shows a compositional bias: acidic residues.

Belongs to the THOC5 family. Component of the THO subcomplex, which is composed of thoc1, thoc2, thoc3, thoc5, thoc6 and thoc7. Component of the transcription/export (TREX) complex at least composed of alyref/thoc4, ddx39b, sarnp/cip29, chtop and the THO subcomplex. Interacts with thoc7.

Its subcellular location is the nucleus. It localises to the nucleus speckle. The protein resides in the cytoplasm. In terms of biological role, component of the THO subcomplex of the TREX complex which is thought to couple mRNA transcription, processing and nuclear export, and which specifically associates with spliced mRNA and not with unspliced pre-mRNA. Plays a key structural role in the oligomerization of the THO-ddx39b complex. TREX is recruited to spliced mRNAs by a transcription-independent mechanism, binds to mRNA upstream of the exon-junction complex (EJC) and is recruited in a splicing- and cap-dependent manner to a region near the 5' end of the mRNA where it functions in mRNA export to the cytoplasm via the TAP/NXF1 pathway. May be involved in cell differentiation. The sequence is that of THO complex subunit 5 homolog B (thoc5-b) from Xenopus laevis (African clawed frog).